A 69-amino-acid chain; its full sequence is MSGEGKKHGSNVEPLRPTRPCPECGRPSVRERYPFCSERCRNVDLNRWLSGSYAIPVADDESKADDEDR.

Positions 1–28 (MSGEGKKHGSNVEPLRPTRPCPECGRPS) are disordered. Cys-21, Cys-24, Cys-36, and Cys-40 together coordinate Zn(2+).

Belongs to the DNA gyrase inhibitor YacG family. In terms of assembly, interacts with GyrB. Zn(2+) is required as a cofactor.

Its function is as follows. Inhibits all the catalytic activities of DNA gyrase by preventing its interaction with DNA. Acts by binding directly to the C-terminal domain of GyrB, which probably disrupts DNA binding by the gyrase. This is DNA gyrase inhibitor YacG from Sinorhizobium fredii (strain NBRC 101917 / NGR234).